Consider the following 248-residue polypeptide: Pulmonary surfactant-associated protein A (248 aa).

The signal sequence occupies residues 1 to 20; it reads MSLGSLAFTLFLTVVAGIKC. Asparagine 21 is a glycosylation site (N-linked (GlcNAc...) asparagine). Positions 28-100 constitute a Collagen-like domain; sequence GSPGIPGTPG…PGERGLPGFP (73 aa). Residues 28 to 100 form a disordered region; the sequence is GSPGIPGTPG…PGERGLPGFP (73 aa). Proline 30, proline 33, proline 36, proline 42, proline 54, proline 57, proline 63, proline 67, proline 70, and proline 76 each carry 4-hydroxyproline. Positions 42–51 are enriched in basic and acidic residues; that stretch reads PGRDGRDGIK. A compositionally biased stretch (pro residues) spans 54-65; the sequence is PGPPGPMGPPGG. Residues 69–82 show a composition bias toward low complexity; the sequence is LPGRDGLPGAPGAP. A compositionally biased stretch (basic and acidic residues) spans 84–93; that stretch reads EHGDKGEPGE. The 117-residue stretch at 132-248 folds into the C-type lectin domain; sequence LSVGDKVFST…LQYRLAICEF (117 aa). Disulfide bonds link cysteine 155–cysteine 246 and cysteine 224–cysteine 238. Residue asparagine 207 is glycosylated (N-linked (GlcNAc...) asparagine). The Ca(2+) site is built by glutamate 215, arginine 217, asparagine 234, and aspartate 235.

Belongs to the SFTPA family. In terms of assembly, oligomeric complex of 6 set of homotrimers.

It localises to the secreted. The protein localises to the extracellular space. Its subcellular location is the extracellular matrix. It is found in the surface film. In presence of calcium ions, it binds to surfactant phospholipids and contributes to lower the surface tension at the air-liquid interface in the alveoli of the mammalian lung and is essential for normal respiration. Enhances the expression of MYO18A/SP-R210 on alveolar macrophages. The chain is Pulmonary surfactant-associated protein A (Sftpa1) from Mus musculus (Mouse).